A 251-amino-acid polypeptide reads, in one-letter code: Phosphate import ATP-binding protein PstB 2 (251 aa).

One can recognise an ABC transporter domain in the interval 5-246; that stretch reads LTTENLSLFY…PVKQETNDYI (242 aa). An ATP-binding site is contributed by 37 to 44; sequence GPSGCGKS.

Belongs to the ABC transporter superfamily. Phosphate importer (TC 3.A.1.7) family. In terms of assembly, the complex is composed of two ATP-binding proteins (PstB), two transmembrane proteins (PstC and PstA) and a solute-binding protein (PstS).

It is found in the cell membrane. It catalyses the reaction phosphate(out) + ATP + H2O = ADP + 2 phosphate(in) + H(+). Part of the ABC transporter complex PstSACB involved in phosphate import. Responsible for energy coupling to the transport system. The polypeptide is Phosphate import ATP-binding protein PstB 2 (Lactiplantibacillus plantarum (strain ATCC BAA-793 / NCIMB 8826 / WCFS1) (Lactobacillus plantarum)).